Consider the following 330-residue polypeptide: MATH domain and coiled-coil domain-containing protein At3g58210 (330 aa).

One can recognise an MATH domain in the interval 6 to 133 (DNKFTWVIQN…NDELKIVAEV (128 aa)). Positions 263–314 (FKVDWLEKKLEEVKKKKEEEQTGEARIQELEEELKEFKQKCLDREAMLEKEK) form a coiled coil.

This chain is MATH domain and coiled-coil domain-containing protein At3g58210, found in Arabidopsis thaliana (Mouse-ear cress).